Consider the following 195-residue polypeptide: Molybdenum cofactor guanylyltransferase (195 aa).

Residues 12 to 14 (LAG), lysine 25, asparagine 53, aspartate 70, and aspartate 100 contribute to the GTP site. Mg(2+) is bound at residue aspartate 100.

It belongs to the MobA family. Monomer. The cofactor is Mg(2+).

It is found in the cytoplasm. The catalysed reaction is Mo-molybdopterin + GTP + H(+) = Mo-molybdopterin guanine dinucleotide + diphosphate. Its function is as follows. Transfers a GMP moiety from GTP to Mo-molybdopterin (Mo-MPT) cofactor (Moco or molybdenum cofactor) to form Mo-molybdopterin guanine dinucleotide (Mo-MGD) cofactor. The sequence is that of Molybdenum cofactor guanylyltransferase from Vibrio vulnificus (strain YJ016).